The chain runs to 115 residues: T cell receptor beta variable 11-2 (115 aa).

Residues Met1–Ala21 form the signal peptide. The 94-residue stretch at Gly22 to Leu115 folds into the Ig-like domain. Cys42 and Cys111 are joined by a disulfide.

In terms of assembly, alpha-beta TR is a heterodimer composed of an alpha and beta chain; disulfide-linked. The alpha-beta TR is associated with the transmembrane signaling CD3 coreceptor proteins to form the TR-CD3 (TcR or TCR). The assembly of alpha-beta TR heterodimers with CD3 occurs in the endoplasmic reticulum where a single alpha-beta TR heterodimer associates with one CD3D-CD3E heterodimer, one CD3G-CD3E heterodimer and one CD247 homodimer forming a stable octameric structure. CD3D-CD3E and CD3G-CD3E heterodimers preferentially associate with TR alpha and TR beta chains, respectively. The association of the CD247 homodimer is the last step of TcR assembly in the endoplasmic reticulum and is required for transport to the cell surface.

It is found in the cell membrane. Functionally, v region of the variable domain of T cell receptor (TR) beta chain that participates in the antigen recognition. Alpha-beta T cell receptors are antigen specific receptors which are essential to the immune response and are present on the cell surface of T lymphocytes. Recognize peptide-major histocompatibility (MH) (pMH) complexes that are displayed by antigen presenting cells (APC), a prerequisite for efficient T cell adaptive immunity against pathogens. Binding of alpha-beta TR to pMH complex initiates TR-CD3 clustering on the cell surface and intracellular activation of LCK that phosphorylates the ITAM motifs of CD3G, CD3D, CD3E and CD247 enabling the recruitment of ZAP70. In turn ZAP70 phosphorylates LAT, which recruits numerous signaling molecules to form the LAT signalosome. The LAT signalosome propagates signal branching to three major signaling pathways, the calcium, the mitogen-activated protein kinase (MAPK) kinase and the nuclear factor NF-kappa-B (NF-kB) pathways, leading to the mobilization of transcription factors that are critical for gene expression and essential for T cell growth and differentiation. The T cell repertoire is generated in the thymus, by V-(D)-J rearrangement. This repertoire is then shaped by intrathymic selection events to generate a peripheral T cell pool of self-MH restricted, non-autoaggressive T cells. Post-thymic interaction of alpha-beta TR with the pMH complexes shapes TR structural and functional avidity. The polypeptide is T cell receptor beta variable 11-2 (Homo sapiens (Human)).